Consider the following 375-residue polypeptide: Probable Na(+)/H(+) antiporter GerT (375 aa).

A run of 10 helical transmembrane segments spans residues 27–47 (PSVL…LGII), 89–109 (AGGI…FGLI), 112–132 (HAIF…VQTL), 145–165 (TILG…AFVM), 183–203 (IIFF…IMKM), 204–224 (LVPL…CFSF), 226–246 (YYSE…GIAI), 261–281 (PIAY…EITF), 288–308 (LWFI…GSGL), and 350–370 (ENFT…PPLL).

The protein belongs to the monovalent cation:proton antiporter 2 (CPA2) transporter (TC 2.A.37) family.

It is found in the membrane. Contributes to the success of spore outgrowth from the germinated state during alkaline or Na(+) stress. Does not have a significant role in germination. In Bacillus cereus, this protein is Probable Na(+)/H(+) antiporter GerT (gerT).